The following is a 155-amino-acid chain: MPKGTGKVIAQNKKAFHDYFIEETYEAGLVLQGTEIKSIRAGRVNLKDAFARIHNGEVWVHNMHINTYEQGNRFNHDPLRTRKLLLHKKEIDKLAGAAKETGYALVPLRIYLKNGFAKMALGLAKGKKQYDKRHDLKEKEAKREIARVFRDRQKM.

It belongs to the SmpB family.

It is found in the cytoplasm. Its function is as follows. Required for rescue of stalled ribosomes mediated by trans-translation. Binds to transfer-messenger RNA (tmRNA), required for stable association of tmRNA with ribosomes. tmRNA and SmpB together mimic tRNA shape, replacing the anticodon stem-loop with SmpB. tmRNA is encoded by the ssrA gene; the 2 termini fold to resemble tRNA(Ala) and it encodes a 'tag peptide', a short internal open reading frame. During trans-translation Ala-aminoacylated tmRNA acts like a tRNA, entering the A-site of stalled ribosomes, displacing the stalled mRNA. The ribosome then switches to translate the ORF on the tmRNA; the nascent peptide is terminated with the 'tag peptide' encoded by the tmRNA and targeted for degradation. The ribosome is freed to recommence translation, which seems to be the essential function of trans-translation. The chain is SsrA-binding protein from Bacillus cereus (strain G9842).